A 171-amino-acid chain; its full sequence is UPF0098 protein aq_1250 (171 aa).

It belongs to the UPF0098 family.

In Aquifex aeolicus (strain VF5), this protein is UPF0098 protein aq_1250.